Consider the following 406-residue polypeptide: MPKKFTTRKGDIYTIDTPNEENLFKSVINKNTSEAFRYISQFNFPLSDNIKTIRYFAIDEDKPNNVGTSHSTLSLIAVINNDLETLNLLINFGFDINNHSGINYITPLGLAADKGYKEIVKLLCEQDDIKVQNALYYAIRGENKSIEIIDLLVQKGAIIKPEHIELAISHSNLSVFEYLFEKKLPDIEKNNLKLIGSSPAISSIDCILGEASKYQNTEVIKFLLSSGYKPEQKYIDEFFVSAADNGRLKTCITLKANIEEHTRLEGLSKYQNYLKDKYHDYYKTHIIFLSKFSYTDEPVEMFMFDNESNLLLLSMSRPLRSKLSSKDSYIIHDAIKEIFNNTHLNIKELELARFKARIEFIKITTDEDLVPLSNKLAPLFSPELIHDLSKLEEELFPEVKLAGLAD.

ANK repeat units lie at residues 68 to 98 (TSHS…DINN), 103 to 129 (NYIT…QDDI), 130 to 161 (KVQN…IIKP), 163 to 189 (HIEL…DIEK), and 203 to 232 (SIDC…KPEQ).

This Rickettsia felis (strain ATCC VR-1525 / URRWXCal2) (Rickettsia azadi) protein is Putative ankyrin repeat protein RF_0266.